Consider the following 578-residue polypeptide: Adenine deaminase (578 aa).

Belongs to the metallo-dependent hydrolases superfamily. Adenine deaminase family. It depends on Mn(2+) as a cofactor.

The enzyme catalyses adenine + H2O + H(+) = hypoxanthine + NH4(+). The polypeptide is Adenine deaminase (Ligilactobacillus salivarius (strain UCC118) (Lactobacillus salivarius)).